The sequence spans 1196 residues: DNA-directed RNA polymerase subunit 2 (1196 aa).

Residues S1074 to G1095 form a disordered region. A C4-type zinc finger spans residues C1133–C1154.

This sequence belongs to the RNA polymerase beta chain family.

It localises to the virion. The catalysed reaction is RNA(n) + a ribonucleoside 5'-triphosphate = RNA(n+1) + diphosphate. Functionally, DNA-dependent RNA polymerase catalyzes the transcription of DNA into RNA using the four ribonucleoside triphosphates as substrates. The protein is DNA-directed RNA polymerase subunit 2 (RPO2) of Acanthamoeba polyphaga mimivirus (APMV).